Here is a 127-residue protein sequence, read N- to C-terminus: Ribonuclease VapC6 (127 aa).

Residues 26–120 (EPQRAEFCRS…ERHLPDIRVR (95 aa)) enclose the PINc domain. Asp86 serves as a coordination point for Mg(2+).

The protein belongs to the PINc/VapC protein family. The cofactor is Mg(2+).

Its function is as follows. Toxic component of a type II toxin-antitoxin (TA) system. An RNase. The cognate antitoxin is VapB6. The sequence is that of Ribonuclease VapC6 from Mycobacterium tuberculosis (strain CDC 1551 / Oshkosh).